The following is a 475-amino-acid chain: Ribulose bisphosphate carboxylase large chain (475 aa).

Positions 1–2 (MS) are excised as a propeptide. P3 is modified (N-acetylproline). K14 carries the post-translational modification N6,N6,N6-trimethyllysine. Substrate-binding residues include N123 and T173. K175 acts as the Proton acceptor in catalysis. K177 is a substrate binding site. The Mg(2+) site is built by K201, D203, and E204. An N6-carboxylysine modification is found at K201. The active-site Proton acceptor is the H294. Substrate-binding residues include R295, H327, and S379.

It belongs to the RuBisCO large chain family. Type I subfamily. Heterohexadecamer of 8 large chains and 8 small chains; disulfide-linked. The disulfide link is formed within the large subunit homodimers. Mg(2+) serves as cofactor. The disulfide bond which can form in the large chain dimeric partners within the hexadecamer appears to be associated with oxidative stress and protein turnover.

Its subcellular location is the plastid. It is found in the chloroplast. The enzyme catalyses 2 (2R)-3-phosphoglycerate + 2 H(+) = D-ribulose 1,5-bisphosphate + CO2 + H2O. The catalysed reaction is D-ribulose 1,5-bisphosphate + O2 = 2-phosphoglycolate + (2R)-3-phosphoglycerate + 2 H(+). In terms of biological role, ruBisCO catalyzes two reactions: the carboxylation of D-ribulose 1,5-bisphosphate, the primary event in carbon dioxide fixation, as well as the oxidative fragmentation of the pentose substrate in the photorespiration process. Both reactions occur simultaneously and in competition at the same active site. The protein is Ribulose bisphosphate carboxylase large chain of Pinus krempfii (Krempf's pine).